The primary structure comprises 325 residues: Olfactory receptor 1S1 (325 aa).

At 1 to 38 the chain is on the extracellular side; it reads MKTFSSFLQIGRNMHQGNQTTITEFILLGFFKQDEHQN. Asn18 carries an N-linked (GlcNAc...) asparagine glycan. Residues 39 to 62 form a helical membrane-spanning segment; that stretch reads LLFVLFLGMYLVTVIGNGLIIVAI. Topologically, residues 63-70 are cytoplasmic; sequence SLDTYLHT. A helical transmembrane segment spans residues 71–92; that stretch reads PMYLFLANLSFADISSISNSVP. Residues 93–113 lie on the Extracellular side of the membrane; sequence KMLVNIQTKSQSISYESCITQ. Cys110 and Cys202 are disulfide-bonded. The chain crosses the membrane as a helical span at residues 114 to 133; the sequence is MYFSIVFVVIDNLLLGTMAY. At 134 to 152 the chain is on the cytoplasmic side; that stretch reads DHFVAICHPLNYTILMRPR. Residues 153 to 171 form a helical membrane-spanning segment; that stretch reads FGILLTVISWFLSNIIALT. Topologically, residues 172–208 are extracellular; that stretch reads HTLLLIQLLFCNHNTLPHFFCDLAPLLKLSCSDTLIN. The chain crosses the membrane as a helical span at residues 209 to 232; it reads ELVLFIVGLSVIIFPFTLSFFSYV. Residues 233–249 lie on the Cytoplasmic side of the membrane; sequence CIIRAVLRVSSTQGKWK. Residues 250–272 traverse the membrane as a helical segment; the sequence is AFSTCGSHLTVVLLFYGTIVGVY. At 273–285 the chain is on the extracellular side; the sequence is FFPSSTHPEDTDK. A helical transmembrane segment spans residues 286–305; the sequence is IGAVLFTVVTPMINPFIYSL. Over 306-325 the chain is Cytoplasmic; it reads RNKDMKGALRKLINRKISSL.

Belongs to the G-protein coupled receptor 1 family.

It localises to the cell membrane. Odorant receptor. In Homo sapiens (Human), this protein is Olfactory receptor 1S1 (OR1S1).